The following is a 215-amino-acid chain: Pyrrolidone-carboxylate peptidase (215 aa).

Active-site residues include Glu78, Cys141, and His165.

It belongs to the peptidase C15 family. Homotetramer.

The protein resides in the cytoplasm. The catalysed reaction is Release of an N-terminal pyroglutamyl group from a polypeptide, the second amino acid generally not being Pro.. In terms of biological role, removes 5-oxoproline from various penultimate amino acid residues except L-proline. This is Pyrrolidone-carboxylate peptidase from Streptococcus pyogenes serotype M18 (strain MGAS8232).